Reading from the N-terminus, the 481-residue chain is MQWEVVIGLEIHTQLTTRSKIFSGSSTQFGSEPNTQASLIDLGMPGVLPVLNQEAVRMAVMFGLAIDAEIGQHNVFARKNYFYPDLPKGYQISQMELPIVGKGHLDIALEDGTVKRVGITRAHLEEDAGKSLHEEFSGATGIDLNRAGTPLLEIVSEPDMRSAKEAVAYVKAIHALVRYLGICDGNMAEGSLRCDCNVSIRPKGQAEFGTRCEIKNVNSFRFIEKAINSEIQRQIDLIEDGGKVIQQTRLYDPNKDETRPMRSKEEANDYRYFPDPDLLPVVIEDSFLNDVRATLPELPPQKRERFQSAFGLSAYDANVLATSREQADYFEKVASIGGDAKLAANWVMVELGSLLNKQNLDIEDSPVSAEQLGGMLQRIKDNTISGKIAKVVFEAMANGEGSADEIIEKCGLKQVTDTGAISAVLDEMLAANAEQVEQYRAADEAKRGKMFGFFVGQAMKASKGKANPQQVNELLKSKLEG.

Belongs to the GatB/GatE family. GatB subfamily. As to quaternary structure, heterotrimer of A, B and C subunits.

It carries out the reaction L-glutamyl-tRNA(Gln) + L-glutamine + ATP + H2O = L-glutaminyl-tRNA(Gln) + L-glutamate + ADP + phosphate + H(+). The enzyme catalyses L-aspartyl-tRNA(Asn) + L-glutamine + ATP + H2O = L-asparaginyl-tRNA(Asn) + L-glutamate + ADP + phosphate + 2 H(+). Its function is as follows. Allows the formation of correctly charged Asn-tRNA(Asn) or Gln-tRNA(Gln) through the transamidation of misacylated Asp-tRNA(Asn) or Glu-tRNA(Gln) in organisms which lack either or both of asparaginyl-tRNA or glutaminyl-tRNA synthetases. The reaction takes place in the presence of glutamine and ATP through an activated phospho-Asp-tRNA(Asn) or phospho-Glu-tRNA(Gln). This Pseudomonas fluorescens (strain Pf0-1) protein is Aspartyl/glutamyl-tRNA(Asn/Gln) amidotransferase subunit B.